The following is a 369-amino-acid chain: MKYKRIVFKVGTSSLTNEDGSLSRSKVKDITQQLAMLHEAGHELILVSSGAIAAGFGALGFKKRPTKIADKQASAAVGQGLLLEEYTTNLLLRQIVSAQILLTQDDFVDKRRYKNAHQALSVLLNRGAIPIINENDSVVIDEVKVGDNDTLSAQVAAMVQADLLVLLTDVDGLYTGNPNSDPRAKRLERIETINREIIDMAGGAGSSNGTGGMLTKIKAATIATESGVPVYICSSLKSDSMIEAAEETEDGSYFVAQEKGLRTQKQWLAFYAQSQGSIWVDKGAAEALSQHGKSLLLSGIVEAEGAFSYGDIVTVFDKESGKSLGKGRVQFGASALEDILRSQKAKGVLIYRDDWISITPEIQLLFTEF.

ATP is bound at residue K9. Residues S49, D136, and N148 each coordinate substrate. ATP-binding positions include 168 to 169 (TD) and 210 to 216 (TGGMLTK). The 81-residue stretch at 275-355 (QGSIWVDKGA…KGVLIYRDDW (81 aa)) folds into the PUA domain.

The protein belongs to the glutamate 5-kinase family.

The protein localises to the cytoplasm. It carries out the reaction L-glutamate + ATP = L-glutamyl 5-phosphate + ADP. It participates in amino-acid biosynthesis; L-proline biosynthesis; L-glutamate 5-semialdehyde from L-glutamate: step 1/2. Its function is as follows. Catalyzes the transfer of a phosphate group to glutamate to form L-glutamate 5-phosphate. This is Glutamate 5-kinase from Streptococcus pneumoniae (strain Hungary19A-6).